We begin with the raw amino-acid sequence, 173 residues long: MDIAIQHPWFKRALGPFYPSRLFDQFFGEGLFEYDLLPFLSSTISPYYRQSLFRTVLDSGISEVRSDRDKFVIFLDVKHFSPEDLTVKVLEDFVEIHGKHNERQDDHGYISREFHRRYRLPSNVDQSALSCSLSADGMLTFSGPKVPSGVDAGHSERAIPVSREEKPSSAPSS.

Met1 carries the post-translational modification N-acetylmethionine. Residues 1–63 are required for complex formation with BFSP1 and BFSP2; that stretch reads MDIAIQHPWF…RTVLDSGISE (63 aa). Gln6 carries the deamidated glutamine; partial modification. Residue Ser45 is modified to Phosphoserine. A Deamidated glutamine; partial modification is found at Gln50. One can recognise a sHSP domain in the interval 52 to 162; that stretch reads LFRTVLDSGI…GHSERAIPVS (111 aa). Lys70 and Lys99 each carry N6-acetyllysine. His100 serves as a coordination point for Zn(2+). Asn101 carries the post-translational modification Deamidated asparagine; partial. Glu102 and His107 together coordinate Zn(2+). At Ser122 the chain carries Phosphoserine. Asn123 is subject to Deamidated asparagine; partial. The tract at residues 144 to 173 is disordered; sequence PKVPSGVDAGHSERAIPVSREEKPSSAPSS. The span at 153–167 shows a compositional bias: basic and acidic residues; sequence GHSERAIPVSREEKP. Zn(2+) is bound at residue His154. The O-linked (GlcNAc) serine glycan is linked to Ser162.

Belongs to the small heat shock protein (HSP20) family. As to quaternary structure, heteromer composed of three CRYAA and one CRYAB subunits. Inter-subunit bridging via zinc ions enhances stability, which is crucial as there is no protein turn over in the lens. Can also form homodimers and homotetramers (dimers of dimers) which serve as the building blocks of homooligomers. Within homooligomers, the zinc-binding motif is created from residues of 3 different molecules. His-100 and Glu-102 from one molecule are ligands of the zinc ion, and His-107 and His-154 residues from additional molecules complete the site with tetrahedral coordination geometry. Part of a complex required for lens intermediate filament formation composed of BFSP1, BFSP2 and CRYAA. In terms of processing, acetylation at Lys-70 may increase chaperone activity. Post-translationally, undergoes age-dependent proteolytical cleavage at the C-terminus.

The protein resides in the cytoplasm. It is found in the nucleus. Its function is as follows. Contributes to the transparency and refractive index of the lens. Acts as a chaperone, preventing aggregation of various proteins under a wide range of stress conditions. Required for the correct formation of lens intermediate filaments as part of a complex composed of BFSP1, BFSP2 and CRYAA. This chain is Alpha-crystallin A chain (CRYAA), found in Canis lupus familiaris (Dog).